Consider the following 246-residue polypeptide: Ribonuclease PH (246 aa).

Residues Arg91 and 129–131 (GTR) each bind phosphate.

Belongs to the RNase PH family. Homohexameric ring arranged as a trimer of dimers.

The catalysed reaction is tRNA(n+1) + phosphate = tRNA(n) + a ribonucleoside 5'-diphosphate. In terms of biological role, phosphorolytic 3'-5' exoribonuclease that plays an important role in tRNA 3'-end maturation. Removes nucleotide residues following the 3'-CCA terminus of tRNAs; can also add nucleotides to the ends of RNA molecules by using nucleoside diphosphates as substrates, but this may not be physiologically important. Probably plays a role in initiation of 16S rRNA degradation (leading to ribosome degradation) during starvation. The chain is Ribonuclease PH from Burkholderia vietnamiensis (strain G4 / LMG 22486) (Burkholderia cepacia (strain R1808)).